A 234-amino-acid chain; its full sequence is MFSRIALLPAFLPVALACLGYEGGVPTPTAHYSNSAVIEIAAGEVFDAGWAKYDRGSGACGGQTEGDWKDAVFYLHSGATLKNVIIGADQSEGVHCDGACTLEFVWFEDVCEDAISIKNDKEGEETWIIGGGAYHADDKVVQHNGCGTVNIINFYAEDYGKVYRSCGNCSSQCKRNVYVEGTTARDGGEVVGINQSFGDTATLVNVCTDADHPCVLYDGCEGDCEPSKVGYCSG.

The N-terminal stretch at 1–17 (MFSRIALLPAFLPVALA) is a signal peptide. 2 N-linked (GlcNAc...) asparagine glycosylation sites follow: Asn-168 and Asn-194.

Belongs to the polysaccharide lyase 3 family. Ca(2+) serves as cofactor.

Its subcellular location is the secreted. The enzyme catalyses Eliminative cleavage of (1-&gt;4)-alpha-D-galacturonan to give oligosaccharides with 4-deoxy-alpha-D-galact-4-enuronosyl groups at their non-reducing ends.. In terms of biological role, pectinolytic enzyme consist of four classes of enzymes: pectin lyase, polygalacturonase, pectin methylesterase and rhamnogalacturonase. Among pectinolytic enzymes, pectin lyase is the most important in depolymerization of pectin, since it cleaves internal glycosidic bonds of highly methylated pectins. Favors pectate, the anion, over pectin, the methyl ester. The sequence is that of Probable pectate lyase F (plyF) from Aspergillus flavus (strain ATCC 200026 / FGSC A1120 / IAM 13836 / NRRL 3357 / JCM 12722 / SRRC 167).